Here is a 142-residue protein sequence, read N- to C-terminus: Large ribosomal subunit protein uL13 (142 aa).

It belongs to the universal ribosomal protein uL13 family. As to quaternary structure, part of the 50S ribosomal subunit.

Its function is as follows. This protein is one of the early assembly proteins of the 50S ribosomal subunit, although it is not seen to bind rRNA by itself. It is important during the early stages of 50S assembly. This is Large ribosomal subunit protein uL13 from Dechloromonas aromatica (strain RCB).